The chain runs to 32 residues: Giant hemoglobin AIV chain (32 aa).

It belongs to the globin family. As to quaternary structure, giant hemoglobin is composed of four heme-containing chains (AI to AIV), and two linker chains (AV and AVI).

The polypeptide is Giant hemoglobin AIV chain (Lamellibrachia sp. (Deep-sea giant tube worm)).